The chain runs to 296 residues: MSTRYLSGSAVALVTPFKKDMTVDTDALRRLVQFQIAAGTDIIIPCGTTGESPTLSEDEQFDIIRIVKDEVDGKALVAAGAGTNSTPHAVALAKNAVKAGASLLLSVAPYYNKPSQEGIYQHYRHIAEAVTVPIIIYNVPGRTGCNVAASTILRLARDFENIAAVKEATENMSQISELLEERPDHFSVLTGEDSLILPFMAMGGDGVISVAANQIPSQIKQLVEAARLGDLEEARRINRRYRKLLKLNFIESNPVPVKYALSRMGMIEENYRLPLVPLSAENKLLIDQELESLGLI.

A pyruvate-binding site is contributed by Thr49. The Proton donor/acceptor role is filled by Tyr137. Residue Lys166 is the Schiff-base intermediate with substrate of the active site. Ile208 is a pyruvate binding site.

It belongs to the DapA family. Homotetramer; dimer of dimers.

The protein localises to the cytoplasm. It catalyses the reaction L-aspartate 4-semialdehyde + pyruvate = (2S,4S)-4-hydroxy-2,3,4,5-tetrahydrodipicolinate + H2O + H(+). It functions in the pathway amino-acid biosynthesis; L-lysine biosynthesis via DAP pathway; (S)-tetrahydrodipicolinate from L-aspartate: step 3/4. Its function is as follows. Catalyzes the condensation of (S)-aspartate-beta-semialdehyde [(S)-ASA] and pyruvate to 4-hydroxy-tetrahydrodipicolinate (HTPA). This Pelodictyon phaeoclathratiforme (strain DSM 5477 / BU-1) protein is 4-hydroxy-tetrahydrodipicolinate synthase.